The sequence spans 540 residues: uncharacterized protein (540 aa).

The Cytoplasmic portion of the chain corresponds to 1 to 61; the sequence is MFSIFKKKTS…TNDSPWQDPT (61 aa). Residues 62 to 82 traverse the membrane as a helical segment; that stretch reads YFSSFGKELMFIATCMLAQLL. Residues 83–108 lie on the Extracellular side of the membrane; the sequence is NQAGQTHALCIMNVLSKSFNSEANNQ. A helical transmembrane segment spans residues 109-129; that stretch reads AWLMASFPLAAGSFILISGRL. Over 130-131 the chain is Cytoplasmic; it reads GD. Residues 132–152 traverse the membrane as a helical segment; the sequence is IYGLKKMLIVGYVIVIVWSII. The Extracellular segment spans residues 153 to 169; sequence SGLSKYSNSDAFFITSR. A helical transmembrane segment spans residues 170–190; the sequence is AFQGVGIAFILPNIMGLVGHV. The Cytoplasmic portion of the chain corresponds to 191–203; that stretch reads YKVGSFRKNIVIS. A helical membrane pass occupies residues 204–224; that stretch reads FIGACAPTGGMFGGLFGGLIV. At 225-232 the chain is on the extracellular side; the sequence is TEDPNQWP. The chain crosses the membrane as a helical span at residues 233-253; that stretch reads WVFYAFGIATFLSLLMAWYSI. Residues 254–272 are Cytoplasmic-facing; it reads PNNVPTNIHGLSMDWTGSA. Residues 273–293 traverse the membrane as a helical segment; the sequence is LAIIGLILFNFVWNQAPIVGW. Over 294–295 the chain is Extracellular; sequence DK. Residues 296–316 form a helical membrane-spanning segment; that stretch reads PYIIVLLIISVIFLVAFFVYE. Topologically, residues 317–334 are cytoplasmic; the sequence is SKYAEVPLLPRAMTKNRH. A helical membrane pass occupies residues 335–355; sequence MIMILLAVFLGWGSFGIWTFY. Residues 356–372 lie on the Extracellular side of the membrane; the sequence is YVSFQLNLRHYSPVWTG. A helical transmembrane segment spans residues 373-393; the sequence is GTYFVFVIFGSMAAFFVAFSI. Residues 394-398 are Cytoplasmic-facing; the sequence is KRLGP. The chain crosses the membrane as a helical span at residues 399 to 419; sequence ALLLCFSLMAFDAGSIMFSVL. Over 420 to 429 the chain is Extracellular; the sequence is PVEQSYWKLN. A helical transmembrane segment spans residues 430 to 450; it reads FAMQAILCFGMDLSFPASSII. Residues 451-461 are Cytoplasmic-facing; the sequence is LSDGLPMQYQG. The chain crosses the membrane as a helical span at residues 462 to 482; it reads MAGSLVNTVINYSASLCLGMG. The Extracellular portion of the chain corresponds to 483-502; that stretch reads GTVEHQINKSGNDLLKGYRA. The chain crosses the membrane as a helical span at residues 503 to 523; the sequence is AVYLGVGLASLGVVISVTYML. The Cytoplasmic segment spans residues 524–540; it reads ENLWNRHRKSEDRSLEA.

Belongs to the major facilitator superfamily.

It localises to the membrane. This is an uncharacterized protein from Saccharomyces cerevisiae (strain ATCC 204508 / S288c) (Baker's yeast).